The sequence spans 279 residues: Serine protease 29 (279 aa).

An N-terminal signal peptide occupies residues 1 to 17 (MLIQLCLTLFFLGCSIA). Residues 31–276 (IVGGHSAPQG…FLPWITQQMQ (246 aa)) form the Peptidase S1 domain. A disulfide bridge connects residues Cys-62 and Cys-78. Active-site charge relay system residues include His-77 and Asp-124. Cystine bridges form between Cys-158–Cys-234, Cys-191–Cys-215, and Cys-224–Cys-252. A glycan (N-linked (GlcNAc...) asparagine) is linked at Asn-197. Ser-228 functions as the Charge relay system in the catalytic mechanism. Asn-235 carries an N-linked (GlcNAc...) asparagine glycan.

It belongs to the peptidase S1 family. As to quaternary structure, homooligomer, heterodimer and heterotetramer. Able to form homo- and hetero- tetrameric structures. Heterotetramer is far more stable than the homotetramer. Expressed in embryos and placenta. Found in uterus especially in glandular epithelium during zona lysis and implantation.

It is found in the secreted. In terms of biological role, involved in embryo hatching and implantation. This is Serine protease 29 (Prss29) from Mus musculus (Mouse).